The primary structure comprises 291 residues: Putative GATA transcription factor 13 (291 aa).

The GATA-type zinc-finger motif lies at 187 to 241; the sequence is KSRRLKCTHCETTTTPQWREGPNGRKTLCNACGIRFRSGRLVLEYRPAASPTFIP. The disordered stretch occupies residues 271–291; sequence TSGPETRSRLRNFGRPMSYGQ.

This sequence belongs to the type IV zinc-finger family. Class A subfamily.

It is found in the nucleus. Its function is as follows. Transcriptional activator that specifically binds 5'-GATA-3' or 5'-GAT-3' motifs within gene promoters. May be involved in the regulation of some light-responsive genes. This is Putative GATA transcription factor 13 (GATA13) from Arabidopsis thaliana (Mouse-ear cress).